We begin with the raw amino-acid sequence, 657 residues long: Glycogen debranching enzyme (657 aa).

Catalysis depends on aspartate 336, which acts as the Nucleophile. Glutamate 371 acts as the Proton donor in catalysis. The interval 460-481 (ANGEENRDGTNNNYSNNHGKEG) is disordered.

The protein belongs to the glycosyl hydrolase 13 family.

It carries out the reaction Hydrolysis of (1-&gt;6)-alpha-D-glucosidic linkages to branches with degrees of polymerization of three or four glucose residues in limit dextrin.. The protein operates within glycan degradation; glycogen degradation. Functionally, removes maltotriose and maltotetraose chains that are attached by 1,6-alpha-linkage to the limit dextrin main chain, generating a debranched limit dextrin. The polypeptide is Glycogen debranching enzyme (Escherichia coli O157:H7).